A 209-amino-acid chain; its full sequence is C-type lectin domain family 6 member A (209 aa).

The Cytoplasmic segment spans residues 1-20 (MVQERHPQRKGVCWTLRLWS). A helical; Signal-anchor for type II membrane protein transmembrane segment spans residues 21 to 43 (TAVISMLLLSTCFIASCMVTYQF). The Extracellular portion of the chain corresponds to 44-209 (TMEKPNRRLS…SICETKKIYL (166 aa)). 2 cysteine pairs are disulfide-bonded: C64/C78 and C79/C90. Positions 86-203 (FGSSCYLIST…CDSKHNSICE (118 aa)) constitute a C-type lectin domain. 3 residues coordinate Ca(2+): V116, N118, and E122. Residue N131 is glycosylated (N-linked (GlcNAc...) asparagine). Positions 168, 170, and 174 each coordinate Ca(2+). Alpha-D-mannopyranose-binding positions include 168-170 (EPN), E174, W182, and 190-191 (ND). C176 and C194 form a disulfide bridge. Residues N190, D191, and E203 each coordinate Ca(2+).

As to quaternary structure, associated with FCER1G. Heterodimer with CLEC4D; this heterodimer forms a pattern recognition receptor (PRR) against fungal infection.

The protein resides in the cell membrane. Calcium-dependent lectin that acts as a pattern recognition receptor (PRR) of the innate immune system: specifically recognizes and binds alpha-mannans on C.albicans hypheas. Binding of C.albicans alpha-mannans to this receptor complex leads to phosphorylation of the immunoreceptor tyrosine-based activation motif (ITAM) of FCER1G, triggering activation of SYK, CARD9 and NF-kappa-B, consequently driving maturation of antigen-presenting cells and shaping antigen-specific priming of T-cells toward effector T-helper 1 and T-helper 17 cell subtypes. Also recognizes, in a mannose-dependent manner, allergens from house dust mite and fungi, by promoting cysteinyl leukotriene production. Recognizes soluble elements from the eggs of Shistosoma mansoni altering adaptive immune responses. The sequence is that of C-type lectin domain family 6 member A (CLEC6A) from Rattus norvegicus (Rat).